Consider the following 208-residue polypeptide: Uridine kinase (208 aa).

Residue 12–19 (GGSGGGKT) coordinates ATP.

The protein belongs to the uridine kinase family.

The protein resides in the cytoplasm. The catalysed reaction is uridine + ATP = UMP + ADP + H(+). The enzyme catalyses cytidine + ATP = CMP + ADP + H(+). It functions in the pathway pyrimidine metabolism; CTP biosynthesis via salvage pathway; CTP from cytidine: step 1/3. The protein operates within pyrimidine metabolism; UMP biosynthesis via salvage pathway; UMP from uridine: step 1/1. This Streptococcus pyogenes serotype M3 (strain ATCC BAA-595 / MGAS315) protein is Uridine kinase.